The chain runs to 140 residues: Large ribosomal subunit protein uL11 (140 aa).

This sequence belongs to the universal ribosomal protein uL11 family. As to quaternary structure, part of the ribosomal stalk of the 50S ribosomal subunit. Interacts with L10 and the large rRNA to form the base of the stalk. L10 forms an elongated spine to which L12 dimers bind in a sequential fashion forming a multimeric L10(L12)X complex. Post-translationally, one or more lysine residues are methylated.

In terms of biological role, forms part of the ribosomal stalk which helps the ribosome interact with GTP-bound translation factors. In Nitratidesulfovibrio vulgaris (strain DSM 19637 / Miyazaki F) (Desulfovibrio vulgaris), this protein is Large ribosomal subunit protein uL11.